The sequence spans 392 residues: Chaperone protein DnaJ 2 (392 aa).

A J domain is found at 10–75 (DFYKELGVSS…AKRKEYDETR (66 aa)). Residues 161 to 239 (GVAMPLRLTS…CKGTGVTTRT (79 aa)) form a CR-type zinc finger. Cysteine 174, cysteine 177, cysteine 191, cysteine 194, cysteine 213, cysteine 216, cysteine 227, and cysteine 230 together coordinate Zn(2+). CXXCXGXG motif repeat units lie at residues 174–181 (CTNCHGSG), 191–198 (CPTCNGSG), 213–220 (CTDCRGSG), and 227–234 (CDECKGTG).

The protein belongs to the DnaJ family. As to quaternary structure, homodimer. Requires Zn(2+) as cofactor.

The protein resides in the cytoplasm. Its function is as follows. Participates actively in the response to hyperosmotic and heat shock by preventing the aggregation of stress-denatured proteins and by disaggregating proteins, also in an autonomous, DnaK-independent fashion. Unfolded proteins bind initially to DnaJ; upon interaction with the DnaJ-bound protein, DnaK hydrolyzes its bound ATP, resulting in the formation of a stable complex. GrpE releases ADP from DnaK; ATP binding to DnaK triggers the release of the substrate protein, thus completing the reaction cycle. Several rounds of ATP-dependent interactions between DnaJ, DnaK and GrpE are required for fully efficient folding. Also involved, together with DnaK and GrpE, in the DNA replication of plasmids through activation of initiation proteins. This is Chaperone protein DnaJ 2 from Mycolicibacterium paratuberculosis (strain ATCC BAA-968 / K-10) (Mycobacterium paratuberculosis).